The primary structure comprises 308 residues: Ferredoxin--NADP reductase (308 aa).

Positions 26, 34, 39, 77, 106, 266, and 306 each coordinate FAD.

It belongs to the ferredoxin--NADP reductase type 2 family. As to quaternary structure, homodimer. It depends on FAD as a cofactor.

The catalysed reaction is 2 reduced [2Fe-2S]-[ferredoxin] + NADP(+) + H(+) = 2 oxidized [2Fe-2S]-[ferredoxin] + NADPH. This chain is Ferredoxin--NADP reductase, found in Lactobacillus delbrueckii subsp. bulgaricus (strain ATCC 11842 / DSM 20081 / BCRC 10696 / JCM 1002 / NBRC 13953 / NCIMB 11778 / NCTC 12712 / WDCM 00102 / Lb 14).